Consider the following 441-residue polypeptide: N-succinylarginine dihydrolase (441 aa).

Substrate is bound by residues 19 to 28 (AGLSFGNEAS), Asn110, and 137 to 138 (HR). The active site involves Glu174. Arg212 serves as a coordination point for substrate. The active site involves His248. Positions 250 and 359 each coordinate substrate. Cys365 (nucleophile) is an active-site residue.

Belongs to the succinylarginine dihydrolase family. In terms of assembly, homodimer.

The catalysed reaction is N(2)-succinyl-L-arginine + 2 H2O + 2 H(+) = N(2)-succinyl-L-ornithine + 2 NH4(+) + CO2. It functions in the pathway amino-acid degradation; L-arginine degradation via AST pathway; L-glutamate and succinate from L-arginine: step 2/5. Its function is as follows. Catalyzes the hydrolysis of N(2)-succinylarginine into N(2)-succinylornithine, ammonia and CO(2). In Cronobacter sakazakii (strain ATCC BAA-894) (Enterobacter sakazakii), this protein is N-succinylarginine dihydrolase.